Here is a 167-residue protein sequence, read N- to C-terminus: tRNA-specific adenosine deaminase (167 aa).

Residues 6-117 (FSHEYWMRHA…DAKTGAAGSL (112 aa)) form the CMP/dCMP-type deaminase domain. His57 is a Zn(2+) binding site. The active-site Proton donor is the Glu59. 2 residues coordinate Zn(2+): Cys87 and Cys90.

Belongs to the cytidine and deoxycytidylate deaminase family. As to quaternary structure, homodimer. Zn(2+) is required as a cofactor.

The enzyme catalyses adenosine(34) in tRNA + H2O + H(+) = inosine(34) in tRNA + NH4(+). In terms of biological role, catalyzes the deamination of adenosine to inosine at the wobble position 34 of tRNA(Arg2). Essential for cell viability. The chain is tRNA-specific adenosine deaminase from Escherichia coli (strain K12).